The following is a 313-amino-acid chain: Porphobilinogen deaminase (313 aa).

Cys241 carries the post-translational modification S-(dipyrrolylmethanemethyl)cysteine.

This sequence belongs to the HMBS family. In terms of assembly, monomer. Requires dipyrromethane as cofactor.

It carries out the reaction 4 porphobilinogen + H2O = hydroxymethylbilane + 4 NH4(+). It participates in porphyrin-containing compound metabolism; protoporphyrin-IX biosynthesis; coproporphyrinogen-III from 5-aminolevulinate: step 2/4. It functions in the pathway porphyrin-containing compound metabolism; chlorophyll biosynthesis. Functionally, tetrapolymerization of the monopyrrole PBG into the hydroxymethylbilane pre-uroporphyrinogen in several discrete steps. The sequence is that of Porphobilinogen deaminase from Chlorobium limicola (strain DSM 245 / NBRC 103803 / 6330).